An 867-amino-acid polypeptide reads, in one-letter code: DNA mismatch repair protein MutS (867 aa).

609–616 serves as a coordination point for ATP; sequence GPNMSGKS.

This sequence belongs to the DNA mismatch repair MutS family.

This protein is involved in the repair of mismatches in DNA. It is possible that it carries out the mismatch recognition step. This protein has a weak ATPase activity. In Latilactobacillus sakei subsp. sakei (strain 23K) (Lactobacillus sakei subsp. sakei), this protein is DNA mismatch repair protein MutS.